A 346-amino-acid polypeptide reads, in one-letter code: Ly6/PLAUR domain-containing protein 3 (346 aa).

The first 30 residues, 1–30 (MDPARKAGAQAMIWTAGWLLLLLLRGGAQA), serve as a signal peptide directing secretion. UPAR/Ly6 domains lie at 33–126 (CYSC…ALDP) and 140–222 (CYSC…SRCN). 4 N-linked (GlcNAc...) asparagine glycosylation sites follow: Asn118, Asn163, Asn176, and Asn183. Residues 233–324 (PRIPPLVRLP…KGGPQQPHNK (92 aa)) are disordered. The span at 234–246 (RIPPLVRLPPPEP) shows a compositional bias: pro residues. The span at 247–269 (TTVASTTSVTTSTSAPVRPTSTT) shows a compositional bias: low complexity. Over residues 283-295 (GVEHEASRDEEPR) the composition is skewed to basic and acidic residues. The GPI-anchor amidated cysteine moiety is linked to residue Cys326. The propeptide at 327 to 346 (VAPTAGLAALLLAVAAGVLL) is removed in mature form.

Binds laminin-1 and laminin-5. Interacts with LGALS3. Interacts with AGR2 and AGR3. Post-translationally, N-glycosylated and O-glycosylated. Expressed in placenta, skin and urothelium. Found in suprabasal keratinocytes of chronic wounds. Weak expression is found in esophagus and peripheral blood mononuclear cells. Found in the majority of primary and metastatic transitional cell carcinomas (TCCs) and as well in breast cancer tissues, but not in adjacent normal tissues. High expression is found in the tumor component of some noninvasive superficial lesions and in invasive and metastatic urothelial cancers.

It localises to the cell membrane. In terms of biological role, supports cell migration. May be involved in urothelial cell-matrix interactions. May be involved in tumor progression. In Homo sapiens (Human), this protein is Ly6/PLAUR domain-containing protein 3 (LYPD3).